A 429-amino-acid polypeptide reads, in one-letter code: C4-dicarboxylate transport protein (429 aa).

A run of 8 helical transmembrane segments spans residues 3-23 (LTIF…GVLL), 44-64 (LIKM…IAGM), 76-96 (IALL…LLIV), 142-162 (IGAF…LFGF), 184-204 (VIFG…FGAM), 222-242 (LIAC…GSIA), 326-346 (VIHQ…AAGV), and 352-372 (IVLA…LALI).

It belongs to the dicarboxylate/amino acid:cation symporter (DAACS) (TC 2.A.23) family.

It localises to the cell inner membrane. In terms of biological role, responsible for the transport of dicarboxylates such as succinate, fumarate, and malate from the periplasm across the membrane. This Serratia proteamaculans (strain 568) protein is C4-dicarboxylate transport protein.